The chain runs to 294 residues: 4-hydroxy-tetrahydrodipicolinate synthase (294 aa).

Threonine 45 serves as a coordination point for pyruvate. Tyrosine 133 serves as the catalytic Proton donor/acceptor. Residue lysine 161 is the Schiff-base intermediate with substrate of the active site. Position 203 (isoleucine 203) interacts with pyruvate.

This sequence belongs to the DapA family. As to quaternary structure, homotetramer; dimer of dimers.

The protein localises to the cytoplasm. It carries out the reaction L-aspartate 4-semialdehyde + pyruvate = (2S,4S)-4-hydroxy-2,3,4,5-tetrahydrodipicolinate + H2O + H(+). It functions in the pathway amino-acid biosynthesis; L-lysine biosynthesis via DAP pathway; (S)-tetrahydrodipicolinate from L-aspartate: step 3/4. Functionally, catalyzes the condensation of (S)-aspartate-beta-semialdehyde [(S)-ASA] and pyruvate to 4-hydroxy-tetrahydrodipicolinate (HTPA). This is 4-hydroxy-tetrahydrodipicolinate synthase from Shewanella sp. (strain MR-4).